Consider the following 938-residue polypeptide: E3 ubiquitin-protein ligase CBL-B (938 aa).

A 4H region spans residues 35 to 167; the sequence is PPKQAAADRR…KAIFPNGQFQ (133 aa). Residues 35–343 form the Cbl-PTB domain; the sequence is PPKQAAADRR…GRSYNPDLTG (309 aa). Residues 168–240 are EF-hand-like; that stretch reads GDNFRITKAD…FEFDIFTRLF (73 aa). Ca(2+) contacts are provided by aspartate 221, threonine 223, asparagine 225, tyrosine 227, and glutamate 232. The interval 241-343 is SH2-like; that stretch reads QPWGSILRNW…GRSYNPDLTG (103 aa). Position 282 is a phosphoserine; by PKC/PRKCQ (serine 282). Arginine 286 contacts 4-O-phospho-L-tyrosine. Residues 344–372 form a linker region; that stretch reads LCEPTPHDHIKVTQEQYELYCEMGSTFQL. A Phosphotyrosine modification is found at tyrosine 363. The RING-type zinc-finger motif lies at 373-412; the sequence is CKICAENDKDVKIEPCGHLMCTSCLTAWQESDGQGCPFCR. Positions 465–588 are disordered; the sequence is ASVRKCTDRQ…SVPSRDQPMP (124 aa). A compositionally biased stretch (polar residues) spans 473 to 486; that stretch reads RQNSPVTSPGSSPL. Phosphoserine occurs at positions 476, 480, 484, 521, 525, and 529. Positions 543–567 are interaction with VAV1; that stretch reads PLPAPPPPLRDPPPPPERPPPIPPD. The segment covering 544–566 has biased composition (pro residues); that stretch reads LPAPPPPLRDPPPPPERPPPIPP. A Phosphoserine modification is found at serine 633. Phosphotyrosine occurs at positions 664 and 708. 2 disordered regions span residues 702-725 and 771-885; these read EEDD…PSHC and DALP…EAAL. Residues 714-724 are compositionally biased toward polar residues; sequence HPVSLNSQPSH. Residues 775 to 784 show a composition bias toward pro residues; the sequence is PSLPPPPPPA. Residues 794–804 show a composition bias toward low complexity; the sequence is PPGSSSRPSSG. Positions 839-855 are enriched in polar residues; the sequence is NRASQDYDQLPSSSDGS. Tyrosine 845 is modified (phosphotyrosine). An interaction with SH3KBP1 region spans residues 847 to 883; the sequence is QLPSSSDGSQAPARPPKPRPRRTAPEIHHRKPHGPEA. Positions 862–878 are enriched in basic residues; that stretch reads PKPRPRRTAPEIHHRKP. The 40-residue stretch at 887-926 folds into the UBA domain; sequence NVDAKIAKLMGEGYAFEEVKRALEIAQNNLEVARSILREF.

As to quaternary structure, interacts with SH3 domain-containing proteins LCK, CRK and SORBS1. Interacts with LCP2 and ZAP70. Interacts with CBL. Interacts with SH3 domain-containing proteins VAV1, FYN, FGR, PLCG1, GRB2, CRKL, PIK3R1 and SH3KBP1/CIN85. Identified in heterotrimeric complexes with SH3KBP1/CIN85, CD2AP and ARHGEF7, where one CBLB peptide binds two copies of the other protein. Interacts with poly-ubiquitinated proteins. Dimerization is required for the binding of poly-ubiquitin, but not for the binding of mono-ubiquitin. Interacts with EGFR (phosphorylated). Interacts with IFT20. Phosphorylated on tyrosine and serine residues upon TCR or BCR activation, and upon various types of cell stimulation. In terms of processing, auto-ubiquitinated upon EGF-mediated cell activation or upon T-cell costimulation by CD28; which promotes proteasomal degradation.

The protein localises to the cytoplasm. It carries out the reaction S-ubiquitinyl-[E2 ubiquitin-conjugating enzyme]-L-cysteine + [acceptor protein]-L-lysine = [E2 ubiquitin-conjugating enzyme]-L-cysteine + N(6)-ubiquitinyl-[acceptor protein]-L-lysine.. It participates in protein modification; protein ubiquitination. E3 ubiquitin-protein ligase which accepts ubiquitin from specific E2 ubiquitin-conjugating enzymes, and transfers it to substrates, generally promoting their degradation by the proteasome. Negatively regulates TCR (T-cell receptor), BCR (B-cell receptor) and FCER1 (high affinity immunoglobulin epsilon receptor) signal transduction pathways. In naive T-cells, inhibits VAV1 activation upon TCR engagement and imposes a requirement for CD28 costimulation for proliferation and IL-2 production. Also acts by promoting PIK3R1/p85 ubiquitination, which impairs its recruitment to the TCR and subsequent activation. In activated T-cells, inhibits PLCG1 activation and calcium mobilization upon restimulation and promotes anergy. In B-cells, acts by ubiquitinating SYK and promoting its proteasomal degradation. Slightly promotes SRC ubiquitination. May be involved in EGFR ubiquitination and internalization. May be functionally coupled with the E2 ubiquitin-protein ligase UB2D3. In association with CBL, required for proper feedback inhibition of ciliary platelet-derived growth factor receptor-alpha (PDGFRA) signaling pathway via ubiquitination and internalization of PDGFRA. The protein is E3 ubiquitin-protein ligase CBL-B (Cblb) of Rattus norvegicus (Rat).